The chain runs to 514 residues: 1-pyrroline-5-carboxylate dehydrogenase (514 aa).

Active-site residues include Glu-286 and Cys-320.

Belongs to the aldehyde dehydrogenase family. RocA subfamily.

It catalyses the reaction L-glutamate 5-semialdehyde + NAD(+) + H2O = L-glutamate + NADH + 2 H(+). It functions in the pathway amino-acid degradation; L-proline degradation into L-glutamate; L-glutamate from L-proline: step 2/2. In Staphylococcus aureus (strain MW2), this protein is 1-pyrroline-5-carboxylate dehydrogenase.